A 306-amino-acid polypeptide reads, in one-letter code: Apolipoprotein E (306 aa).

Positions 1-18 (MKVLWAVLVVTLLAGCQA) are cleaved as a signal peptide. Tandem repeats lie at residues 81–102 (VLME…QELG), 103–124 (PMAE…ARLG), 125–146 (ADME…TMLG), 147–168 (QSAE…KRLL), 169–190 (RDAE…EGAE), 191–212 (RGVS…LRAA), 213–230 (QTSQ…ERLR), and 231–252 (GRLE…EQME). An 8 X 22 AA approximate tandem repeats region spans residues 81 to 252 (VLMEDTMKEV…RLDVVREQME (172 aa)). M144 carries the post-translational modification Methionine sulfoxide. S148 is subject to Phosphoserine. Residues 159-169 (HLRKLRKRLLR) form an LDL and other lipoprotein receptors binding region. A heparin-binding site is contributed by 163-166 (LRKR). The lipid-binding and lipoprotein association stretch occupies residues 211–280 (AAQTSQPLRE…GWFEPVVEDM (70 aa)). Residue 226–233 (GERLRGRL) participates in heparin binding. The segment at 268–280 (RLKGWFEPVVEDM) is specificity for association with VLDL.

The protein belongs to the apolipoprotein A1/A4/E family. Homotetramer. May interact with ABCA1; functionally associated with ABCA1 in the biogenesis of HDLs. May interact with APP/A4 amyloid-beta peptide; the interaction is extremely stable in vitro but its physiological significance is unclear. May interact with MAPT. May interact with MAP2. In the cerebrospinal fluid, interacts with secreted SORL1. Interacts with PMEL; this allows the loading of PMEL luminal fragment on ILVs to induce fibril nucleation. APOE exists as multiple glycosylated and sialylated glycoforms within cells and in plasma. The extent of glycosylation and sialylation are tissue and context specific. In terms of processing, glycated in plasma VLDL. Post-translationally, phosphorylated by FAM20C in the extracellular medium.

The protein localises to the secreted. It localises to the extracellular space. Its subcellular location is the extracellular matrix. The protein resides in the extracellular vesicle. It is found in the endosome. The protein localises to the multivesicular body. In terms of biological role, APOE is an apolipoprotein, a protein associating with lipid particles, that mainly functions in lipoprotein-mediated lipid transport between organs via the plasma and interstitial fluids. APOE is a core component of plasma lipoproteins and is involved in their production, conversion and clearance. Apolipoproteins are amphipathic molecules that interact both with lipids of the lipoprotein particle core and the aqueous environment of the plasma. As such, APOE associates with chylomicrons, chylomicron remnants, very low density lipoproteins (VLDL) and intermediate density lipoproteins (IDL) but shows a preferential binding to high-density lipoproteins (HDL). It also binds a wide range of cellular receptors including the LDL receptor/LDLR, the LDL receptor-related proteins LRP1, LRP2 and LRP8 and the very low-density lipoprotein receptor/VLDLR that mediate the cellular uptake of the APOE-containing lipoprotein particles. Finally, APOE also has a heparin-binding activity and binds heparan-sulfate proteoglycans on the surface of cells, a property that supports the capture and the receptor-mediated uptake of APOE-containing lipoproteins by cells. A main function of APOE is to mediate lipoprotein clearance through the uptake of chylomicrons, VLDLs, and HDLs by hepatocytes. APOE is also involved in the biosynthesis by the liver of VLDLs as well as their uptake by peripheral tissues ensuring the delivery of triglycerides and energy storage in muscle, heart and adipose tissues. By participating in the lipoprotein-mediated distribution of lipids among tissues, APOE plays a critical role in plasma and tissues lipid homeostasis. APOE is also involved in two steps of reverse cholesterol transport, the HDLs-mediated transport of cholesterol from peripheral tissues to the liver, and thereby plays an important role in cholesterol homeostasis. First, it is functionally associated with ABCA1 in the biogenesis of HDLs in tissues. Second, it is enriched in circulating HDLs and mediates their uptake by hepatocytes. APOE also plays an important role in lipid transport in the central nervous system, regulating neuron survival and sprouting. The chain is Apolipoprotein E (APOE) from Hystrix brachyura (Malayan porcupine).